Here is a 176-residue protein sequence, read N- to C-terminus: HTH-type transcriptional regulator DctR (176 aa).

An HTH luxR-type domain is found at Val-109 to Tyr-174. A DNA-binding region (H-T-H motif) is located at residues Thr-133 to His-152.

Its function is as follows. May act as a transcriptional regulator of dctA. Could be involved in the regulation of the genes coding for the type III secretion system in enterohaemorragic strains. In Escherichia coli O157:H7, this protein is HTH-type transcriptional regulator DctR (dctR).